The chain runs to 263 residues: Diphthine synthase (263 aa).

S-adenosyl-L-methionine is bound by residues Leu-9, Asp-84, Met-87, 112-113, Leu-164, Ala-207, and His-232; that span reads SI.

Belongs to the diphthine synthase family. Homodimer.

It carries out the reaction 2-[(3S)-amino-3-carboxypropyl]-L-histidyl-[translation elongation factor 2] + 3 S-adenosyl-L-methionine = diphthine-[translation elongation factor 2] + 3 S-adenosyl-L-homocysteine + 3 H(+). It functions in the pathway protein modification; peptidyl-diphthamide biosynthesis. In terms of biological role, S-adenosyl-L-methionine-dependent methyltransferase that catalyzes the trimethylation of the amino group of the modified target histidine residue in translation elongation factor 2 (EF-2), to form an intermediate called diphthine. The three successive methylation reactions represent the second step of diphthamide biosynthesis. The sequence is that of Diphthine synthase from Methanosphaera stadtmanae (strain ATCC 43021 / DSM 3091 / JCM 11832 / MCB-3).